Here is a 448-residue protein sequence, read N- to C-terminus: Exodeoxyribonuclease 7 large subunit (448 aa).

This sequence belongs to the XseA family. As to quaternary structure, heterooligomer composed of large and small subunits.

The protein resides in the cytoplasm. It carries out the reaction Exonucleolytic cleavage in either 5'- to 3'- or 3'- to 5'-direction to yield nucleoside 5'-phosphates.. In terms of biological role, bidirectionally degrades single-stranded DNA into large acid-insoluble oligonucleotides, which are then degraded further into small acid-soluble oligonucleotides. The sequence is that of Exodeoxyribonuclease 7 large subunit from Nitrosomonas eutropha (strain DSM 101675 / C91 / Nm57).